The sequence spans 360 residues: Histidinol-phosphate aminotransferase (360 aa).

Lys218 is modified (N6-(pyridoxal phosphate)lysine).

This sequence belongs to the class-II pyridoxal-phosphate-dependent aminotransferase family. Histidinol-phosphate aminotransferase subfamily. As to quaternary structure, homodimer. It depends on pyridoxal 5'-phosphate as a cofactor.

It catalyses the reaction L-histidinol phosphate + 2-oxoglutarate = 3-(imidazol-4-yl)-2-oxopropyl phosphate + L-glutamate. The protein operates within amino-acid biosynthesis; L-histidine biosynthesis; L-histidine from 5-phospho-alpha-D-ribose 1-diphosphate: step 7/9. The polypeptide is Histidinol-phosphate aminotransferase (Chlorobium phaeobacteroides (strain DSM 266 / SMG 266 / 2430)).